The chain runs to 406 residues: MRSSATKGAKLKNSPRERLSSFNPQYAERYKELYRTLFWLLLISVLANTAPITILPGCPNRFYRLVHLSWMILWYGLFVLGSYWEFVLVTTQRVSLDRYLNAIESAIYVVHIFSIMLLTWQCRNWAPKLMTNIVTSDLNRAYTIDCNRTKRFIRLQLFLVGIFACLAIFFNIWTHKFVVYRSILSINSYVMPNIISSISFAQYYLLLQGIAWRQRRLTEGLERELTHLHSPRISEVQKIRMHHANLIDFTKAVNRTFQYSILLLFVGCFLNFNLVLFLVYQGIENPSMADFTKWVCMLLWLAMHVGKVCSILHFNQSIQNEHSTCLTLLSRVSYARKDIQDTITHFIIQMRTNVRQHVVCGVINLDLKFLTTLLVASADFFIFLLQYDVTYEALSKSVQGNVTRYK.

Residues methionine 1–threonine 36 lie on the Cytoplasmic side of the membrane. Residues leucine 37–glycine 57 traverse the membrane as a helical segment. The Extracellular segment spans residues cysteine 58 to serine 69. Residues tryptophan 70–threonine 90 form a helical membrane-spanning segment. At threonine 91–tyrosine 99 the chain is on the cytoplasmic side. The helical transmembrane segment at leucine 100 to tryptophan 120 threads the bilayer. The Extracellular portion of the chain corresponds to glutamine 121–arginine 154. N-linked (GlcNAc...) asparagine glycosylation occurs at asparagine 147. A helical membrane pass occupies residues leucine 155–histidine 175. Over lysine 176–tyrosine 189 the chain is Cytoplasmic. A helical membrane pass occupies residues valine 190–isoleucine 210. The Extracellular segment spans residues alanine 211–tyrosine 259. N-linked (GlcNAc...) asparagine glycosylation occurs at asparagine 254. Residues serine 260–tyrosine 280 form a helical membrane-spanning segment. Over glutamine 281 to asparagine 364 the chain is Cytoplasmic. The helical transmembrane segment at leucine 365–leucine 385 threads the bilayer. At glutamine 386 to lysine 406 the chain is on the extracellular side. Residue asparagine 401 is glycosylated (N-linked (GlcNAc...) asparagine).

Belongs to the insect chemoreceptor superfamily. Gustatory receptor (GR) family. Gr10a subfamily. As to expression, expressed in the adult abdomen and wing. In larvae, is expressed in neurons of the terminal external chemosensory organ.

The protein resides in the cell membrane. Its function is as follows. Probable gustatory receptor which mediates acceptance or avoidance behavior, depending on its substrates. This chain is Putative gustatory receptor 59f (Gr59f), found in Drosophila melanogaster (Fruit fly).